A 203-amino-acid polypeptide reads, in one-letter code: Urease accessory protein UreG (203 aa).

GTP is bound at residue 14-21 (GPVGSGKT).

This sequence belongs to the SIMIBI class G3E GTPase family. UreG subfamily. In terms of assembly, homodimer. UreD, UreF and UreG form a complex that acts as a GTP-hydrolysis-dependent molecular chaperone, activating the urease apoprotein by helping to assemble the nickel containing metallocenter of UreC. The UreE protein probably delivers the nickel.

Its subcellular location is the cytoplasm. In terms of biological role, facilitates the functional incorporation of the urease nickel metallocenter. This process requires GTP hydrolysis, probably effectuated by UreG. This is Urease accessory protein UreG from Agrobacterium fabrum (strain C58 / ATCC 33970) (Agrobacterium tumefaciens (strain C58)).